The sequence spans 356 residues: Protein pelota homolog (356 aa).

This sequence belongs to the eukaryotic release factor 1 family. Pelota subfamily. Monomer. A divalent metal cation is required as a cofactor.

It localises to the cytoplasm. Functionally, may function in recognizing stalled ribosomes, interact with stem-loop structures in stalled mRNA molecules, and effect endonucleolytic cleavage of the mRNA. May play a role in the release non-functional ribosomes and degradation of damaged mRNAs. Has endoribonuclease activity. The protein is Protein pelota homolog of Pyrococcus abyssi (strain GE5 / Orsay).